Reading from the N-terminus, the 1086-residue chain is Lysine-specific demethylase 4B (1086 aa).

The JmjN domain maps to 15-57 (IMTFRPTMDEFRDFNRYVAYIESQGAHRAGLAKIIPPKEWKPR). Residue tyrosine 133 participates in 2-oxoglutarate binding. The region spanning 146 to 309 (VAQWNIGNLR…YGKVATQCTC (164 aa)) is the JmjC domain. 2 residues coordinate Fe cation: histidine 189 and glutamate 191. Positions 199 and 207 each coordinate 2-oxoglutarate. Residues cysteine 235 and histidine 241 each contribute to the Zn(2+) site. Position 242 (lysine 242) interacts with 2-oxoglutarate. Position 277 (histidine 277) interacts with Fe cation. The Zn(2+) site is built by cysteine 307 and cysteine 309. Residues 379 to 395 (SRPWRKAEEERRREPTR) show a composition bias toward basic and acidic residues. 2 disordered regions span residues 379–536 (SRPW…PPGA) and 575–624 (PMEL…LSVV). Over residues 401–410 (SHRRRSQPKK) the composition is skewed to basic residues. Residues 441-450 (MPEDEEEEEL) show a composition bias toward acidic residues. The span at 456–467 (HEAEGVEEDGRG) shows a compositional bias: basic and acidic residues. The segment covering 468 to 480 (KPRPTKARNKKKT) has biased composition (basic residues). Residues 512–522 (GPAMGPMAAEG) show a composition bias toward low complexity. A compositionally biased stretch (polar residues) spans 585-597 (QAQAGDSQGTTPF). Lysine 599 carries the post-translational modification N6-acetyllysine. The segment at 719-777 (MCFTSSGENTEPLPANSYVGEDGTSPLISCAHCCLQVHASCYGVRPELAKEGWTCSRCA) adopts a PHD-type 1 zinc-finger fold. The C2HC pre-PHD-type zinc-finger motif lies at 782 to 815 (TAECCLCNLRGGALQRTTEHRWIHVICAIAVPEV). Residues 838 to 895 (LKCIYCRKRMKRVSGACIQCSYEHCSTSFHVTCAHAAGVLMEPDDWPYVVSITCLKHR) form a PHD-type 2 zinc finger. Tudor domains follow at residues 905-962 (RTVS…CLRL) and 963-1019 (GPPP…EELP). Positions 1024–1043 (SRLSLSTGTPQEPSFSGDDV) are disordered. Residues 1026 to 1037 (LSLSTGTPQEPS) are compositionally biased toward polar residues.

Belongs to the JHDM3 histone demethylase family. Requires Fe(2+) as cofactor.

The protein localises to the nucleus. It carries out the reaction N(6),N(6),N(6)-trimethyl-L-lysyl(9)-[histone H3] + 2 2-oxoglutarate + 2 O2 = N(6)-methyl-L-lysyl(9)-[histone H3] + 2 formaldehyde + 2 succinate + 2 CO2. Functionally, histone demethylase that specifically demethylates 'Lys-9' of histone H3, thereby playing a role in histone code. Does not demethylate histone H3 'Lys-4', H3 'Lys-27', H3 'Lys-36' nor H4 'Lys-20'. Only able to demethylate trimethylated H3 'Lys-9', with a weaker activity than KDM4A, KDM4C and KDM4D. Demethylation of Lys residue generates formaldehyde and succinate. Plays a critical role in the development of the central nervous system (CNS). This Mus musculus (Mouse) protein is Lysine-specific demethylase 4B (Kdm4b).